The primary structure comprises 471 residues: Sestrin-2 (471 aa).

Position 1 is an N-acetylmethionine (M1). An N-terminal domain; mediates the alkylhydroperoxide reductase activity region spans residues 57–230 (GLEALMSSGR…APSPPSEQST (174 aa)). Catalysis depends on C116, which acts as the Cysteine sulfenic acid (-SOH) intermediate. K166 participates in a covalent cross-link: Glycyl lysine isopeptide (Lys-Gly) (interchain with G-Cter in ubiquitin). Residues 212–241 (DPEGSPAPQAPSPPSEQSTPPSRDSLNHSG) are disordered. Phosphoserine is present on S240. Residues 299-471 (ANPDMLCFVE…ALRAITRYMT (173 aa)) form a C-terminal domain; mediates TORC1 regulation region. Residues 365-368 (TYNT), T377, and E442 each bind L-leucine.

Belongs to the sestrin family. As to quaternary structure, interacts with the GATOR2 complex which is composed of MIOS, SEC13, SEH1L, WDR24 and WDR59; the interaction is negatively regulated by leucine. Conveys leucine availability via direct interaction with SEH1L and WDR24 components of the GATOR2 complex. Interacts with RRAGA, RRAGB, RRAGC and RRAGD; may function as a guanine nucleotide dissociation inhibitor for RRAGs and regulate them. May interact with the TORC2 complex. Interacts with KEAP1, RBX1, SQSTM and ULK1; to regulate the degradation of KEAP1. May also associate with the complex composed of TSC1, TSC2 and the AMP-responsive protein kinase/AMPK to regulate TORC1 signaling. May interact with PRDX1. In terms of processing, phosphorylated by ULK1 at multiple sites. Ubiquitinated at Lys-166 by RNF167 via 'Lys-63'-linked polyubiquitination in response to leucine deprivation: ubiquitination promotes SESN2-interaction with the GATOR2 complex, leading to inhibit the TORC1 signaling pathway. Deubiquitinated at Lys-166 by STAMBPL1, promoting the TORC1 signaling pathway. Ubiquitinated by RNF186; ubiquitination mediates proteasomal degradation.

The protein localises to the cytoplasm. The enzyme catalyses a hydroperoxide + L-cysteinyl-[protein] = S-hydroxy-L-cysteinyl-[protein] + an alcohol. Functionally, functions as an intracellular leucine sensor that negatively regulates the mTORC1 signaling pathway through the GATOR complex. In absence of leucine, binds the GATOR subcomplex GATOR2 and prevents mTORC1 signaling. Binding of leucine to SESN2 disrupts its interaction with GATOR2 thereby activating the TORC1 signaling pathway. This stress-inducible metabolic regulator also plays a role in protection against oxidative and genotoxic stresses. May negatively regulate protein translation in response to endoplasmic reticulum stress, via mTORC1. May positively regulate the transcription by NFE2L2 of genes involved in the response to oxidative stress by facilitating the SQSTM1-mediated autophagic degradation of KEAP1. May also mediate TP53 inhibition of TORC1 signaling upon genotoxic stress. Moreover, may prevent the accumulation of reactive oxygen species (ROS) through the alkylhydroperoxide reductase activity born by the N-terminal domain of the protein. Was originally reported to contribute to oxidative stress resistance by reducing PRDX1. However, this could not be confirmed. This is Sestrin-2 from Bos taurus (Bovine).